Consider the following 351-residue polypeptide: Outer membrane porin PhoE (351 aa).

The signal sequence occupies residues 1-21; sequence MKKSTLALVVMGIVASASVQA.

It belongs to the Gram-negative porin family. In terms of assembly, homotrimer. Forms mixed heterotrimers with OmpC and with OmpF; other mixed heterotrimers are also probable.

The protein resides in the cell outer membrane. Functionally, uptake of inorganic phosphate, phosphorylated compounds, and some other negatively charged solutes. The sequence is that of Outer membrane porin PhoE (phoE) from Escherichia coli (strain K12).